A 468-amino-acid polypeptide reads, in one-letter code: Putative ankyrin repeat protein R873 (468 aa).

ANK repeat units lie at residues 38–68 (IKTD…KHNL), 78–107 (SLNE…DIEG), 109–137 (DNCA…NFRA), 138–167 (NNDK…DIRS), 169–197 (NDCS…NIRT), 198–227 (NDDW…DIRS), 229–257 (DDHA…NIIA), 258–287 (EDNY…NITS), 289–316 (YYTI…NIRD), 317–346 (CDSS…DFRE), 348–376 (DDLT…DFRV), 378–406 (DDYP…DVRA), 407–436 (EDDY…NIRA), and 438–466 (NDYA…VLNK).

The protein is Putative ankyrin repeat protein R873 of Acanthamoeba polyphaga mimivirus (APMV).